A 139-amino-acid polypeptide reads, in one-letter code: Peptide methionine sulfoxide reductase MsrB (139 aa).

The 123-residue stretch at glutamate 8–aspartate 130 folds into the MsrB domain. Positions 47, 50, 96, and 99 each coordinate Zn(2+). Cysteine 119 acts as the Nucleophile in catalysis.

The protein belongs to the MsrB Met sulfoxide reductase family. It depends on Zn(2+) as a cofactor.

It catalyses the reaction L-methionyl-[protein] + [thioredoxin]-disulfide + H2O = L-methionyl-(R)-S-oxide-[protein] + [thioredoxin]-dithiol. The polypeptide is Peptide methionine sulfoxide reductase MsrB (Acinetobacter baylyi (strain ATCC 33305 / BD413 / ADP1)).